The following is a 96-amino-acid chain: MAASPYYLRQTHAPDCACSVCWSVRQAIPLHNPSPCPDCRPPGLPYLEGGRWLCRPRSFCAKHDPSRRPPKYWHVVYDSGKPTPFVPVREDFQLEG.

The sequence is that of 10.9 kDa protein from Pseudomonas aeruginosa (Bacteriophage Pf1).